Consider the following 178-residue polypeptide: NADH-quinone oxidoreductase subunit B (178 aa).

The [4Fe-4S] cluster site is built by Cys45, Cys46, Cys111, and Cys140.

Belongs to the complex I 20 kDa subunit family. In terms of assembly, NDH-1 is composed of 15 different subunits. Subunits NuoB, C, D, E, F, and G constitute the peripheral sector of the complex. It depends on [4Fe-4S] cluster as a cofactor.

It is found in the cell membrane. The catalysed reaction is a quinone + NADH + 5 H(+)(in) = a quinol + NAD(+) + 4 H(+)(out). Its function is as follows. NDH-1 shuttles electrons from NADH, via FMN and iron-sulfur (Fe-S) centers, to quinones in the respiratory chain. The immediate electron acceptor for the enzyme in this species is believed to be a menaquinone. Couples the redox reaction to proton translocation (for every two electrons transferred, four hydrogen ions are translocated across the cytoplasmic membrane), and thus conserves the redox energy in a proton gradient. This Deinococcus geothermalis (strain DSM 11300 / CIP 105573 / AG-3a) protein is NADH-quinone oxidoreductase subunit B.